Here is a 346-residue protein sequence, read N- to C-terminus: Elongation factor 1-alpha (346 aa).

One can recognise a tr-type G domain in the interval 1 to 127 (GTSQADVALL…DNVEPPKRPS (127 aa)). 49 to 52 (NKMD) contacts GTP.

The protein belongs to the TRAFAC class translation factor GTPase superfamily. Classic translation factor GTPase family. EF-Tu/EF-1A subfamily.

The protein resides in the cytoplasm. In terms of biological role, this protein promotes the GTP-dependent binding of aminoacyl-tRNA to the A-site of ribosomes during protein biosynthesis. The protein is Elongation factor 1-alpha of Eimeria bovis.